The primary structure comprises 324 residues: Lactonase drp35 (324 aa).

Residues glutamate 47, serine 109, glycine 111, aspartate 129, threonine 132, tyrosine 134, aspartate 137, asparagine 184, aspartate 235, and serine 236 each coordinate Ca(2+). Catalysis depends on aspartate 235, which acts as the Proton donor.

Belongs to the SMP-30/CGR1 family. Ca(2+) is required as a cofactor.

The protein localises to the cytoplasm. Exhibits lactonase activity. Acts in cells with perturbed membrane integrity and is possibly related to the membrane homeostasis. In Staphylococcus aureus (strain USA300), this protein is Lactonase drp35 (drp35).